Here is a 457-residue protein sequence, read N- to C-terminus: Acetate--CoA ligase [ADP-forming] II subunit alpha (457 aa).

It belongs to the acetate CoA ligase alpha subunit family. Heterotetramer of two alpha and two beta subunits.

It carries out the reaction acetate + ATP + CoA = acetyl-CoA + ADP + phosphate. In terms of biological role, catalyzes the reversible formation of acetate and ATP from acetyl-CoA by using ADP and phosphate. Can use other substrates such as phenylacetyl-CoA, indoleacetyl-CoA and isobutyryl-CoA, but not succinyl-CoA. Seems to be involved primarily in the degradation of aryl-CoA esters to the corresponding acids. Participates in the conversion of acetyl-CoA to acetate and in the degradation of branched-chain amino acids via branched-chain-acyl-CoA esters. The protein is Acetate--CoA ligase [ADP-forming] II subunit alpha of Pyrococcus furiosus (strain ATCC 43587 / DSM 3638 / JCM 8422 / Vc1).